We begin with the raw amino-acid sequence, 304 residues long: Zinc carboxypeptidase (304 aa).

The Peptidase M14 domain maps to 1 to 294; that stretch reads QYHTLPEIYS…DSVVTILKES (294 aa). Histidine 58 and glutamate 61 together coordinate Zn(2+). Cysteine 125 and cysteine 148 form a disulfide bridge. Histidine 184 lines the Zn(2+) pocket. Glutamate 259 serves as the catalytic Proton donor/acceptor.

This sequence belongs to the peptidase M14 family. It depends on Zn(2+) as a cofactor. As to expression, gut specific.

The protein localises to the secreted. Its function is as follows. Involved in the digestion of the blood meal. The protein is Zinc carboxypeptidase of Simulium vittatum (Striped black fly).